The following is a 393-amino-acid chain: 4-hydroxyphenylpyruvate dioxygenase (393 aa).

N-acetylthreonine is present on Thr2. VOC domains follow at residues 18–149 and 180–338; these read HFHS…LVEK and IIDH…IFTK. At Lys132 the chain carries N6-succinyllysine. Fe cation is bound at residue His183. Residues Ser211, Ser226, and Ser250 each carry the phosphoserine modification. The Fe cation site is built by His266 and Glu349.

This sequence belongs to the 4HPPD family. In terms of assembly, homodimer. Fe cation is required as a cofactor.

Its subcellular location is the cytoplasm. It is found in the endoplasmic reticulum membrane. The protein resides in the golgi apparatus membrane. It catalyses the reaction 3-(4-hydroxyphenyl)pyruvate + O2 = homogentisate + CO2. Its pathway is amino-acid degradation; L-phenylalanine degradation; acetoacetate and fumarate from L-phenylalanine: step 3/6. Functionally, catalyzes the conversion of 4-hydroxyphenylpyruvic acid to homogentisic acid, one of the steps in tyrosine catabolism. The polypeptide is 4-hydroxyphenylpyruvate dioxygenase (Hpd) (Rattus norvegicus (Rat)).